The following is a 144-amino-acid chain: Large ribosomal subunit protein uL15 (144 aa).

The segment at 1 to 59 (MHLNTLAPAPGAKKSSKRVGRGMGSGLGKTGGRGHKGQKSRSGGSVKPGFEGGQMPIQR) is disordered. A compositionally biased stretch (gly residues) spans 21 to 31 (RGMGSGLGKTG).

It belongs to the universal ribosomal protein uL15 family. As to quaternary structure, part of the 50S ribosomal subunit.

Its function is as follows. Binds to the 23S rRNA. The sequence is that of Large ribosomal subunit protein uL15 from Pseudoalteromonas atlantica (strain T6c / ATCC BAA-1087).